We begin with the raw amino-acid sequence, 873 residues long: Alanine--tRNA ligase (873 aa).

Zn(2+) is bound by residues H562, H566, C666, and H670.

It belongs to the class-II aminoacyl-tRNA synthetase family. It depends on Zn(2+) as a cofactor.

It localises to the cytoplasm. The catalysed reaction is tRNA(Ala) + L-alanine + ATP = L-alanyl-tRNA(Ala) + AMP + diphosphate. Functionally, catalyzes the attachment of alanine to tRNA(Ala) in a two-step reaction: alanine is first activated by ATP to form Ala-AMP and then transferred to the acceptor end of tRNA(Ala). Also edits incorrectly charged Ser-tRNA(Ala) and Gly-tRNA(Ala) via its editing domain. The polypeptide is Alanine--tRNA ligase (Dichelobacter nodosus (strain VCS1703A)).